Here is a 338-residue protein sequence, read N- to C-terminus: Oligopeptide transport ATP-binding protein OppD (338 aa).

The ABC transporter domain maps to 7 to 257; that stretch reads LEAKQVSVAF…PKHPYTRSLL (251 aa). 43–50 lines the ATP pocket; the sequence is GESGSGKS.

This sequence belongs to the ABC transporter superfamily. As to quaternary structure, the complex is composed of two ATP-binding proteins (OppD and OppF), two transmembrane proteins (OppB and OppC) and a solute-binding protein (OppA).

Its subcellular location is the cell membrane. The enzyme catalyses a [peptide](out) + ATP + H2O = a [peptide](in) + ADP + phosphate + H(+). Functionally, part of the ABC transporter complex OppABCDF involved in the uptake of oligopeptides. Probably responsible for energy coupling to the transport system. Essential for uptake of peptides larger than three amino acids and for growth in milk. The sequence is that of Oligopeptide transport ATP-binding protein OppD (oppD) from Lactococcus lactis subsp. lactis (strain IL1403) (Streptococcus lactis).